A 350-amino-acid polypeptide reads, in one-letter code: MAGLQGGFTTGACAAAAAKMAAALLCGEAISERISIPLLDGTRESLPLAYAHRLPDGAEAAVYKNAGDDPDVTNGALIIARVVASDKPLEFRAGEGVGIITKPGLALPPGEPAINPGPRLMIESAVREVTDRGLRVTIAIPDGKQLAERTFNPRLGIKGGISVLGTTGRVRPFSLEAVRKTMECSYNVACASGVRHPVLVPGHIGERAAHRHFQVTQEQVVEAGNEWGFMIDLVAQTPPSALLVLGHPGKLAKLPLGHWDTHSSRSASPVPSVRELATRILECPVAESTTVEGVFADLTAEQRQCLGDTLARALQIAVSHRLDHRAPVATALINLAGDMLGSCGDLTPWQ.

The protein belongs to the CbiD family.

The catalysed reaction is Co-precorrin-5B + S-adenosyl-L-methionine = Co-precorrin-6A + S-adenosyl-L-homocysteine. Its pathway is cofactor biosynthesis; adenosylcobalamin biosynthesis; cob(II)yrinate a,c-diamide from sirohydrochlorin (anaerobic route): step 6/10. In terms of biological role, catalyzes the methylation of C-1 in cobalt-precorrin-5B to form cobalt-precorrin-6A. The chain is Cobalt-precorrin-5B C(1)-methyltransferase from Syntrophotalea carbinolica (strain DSM 2380 / NBRC 103641 / GraBd1) (Pelobacter carbinolicus).